A 363-amino-acid polypeptide reads, in one-letter code: Uroporphyrinogen decarboxylase (363 aa).

Substrate is bound by residues 36 to 40 (RQAGR), Asp-85, Tyr-160, Ser-215, and His-339.

It belongs to the uroporphyrinogen decarboxylase family. As to quaternary structure, homodimer.

Its subcellular location is the cytoplasm. It catalyses the reaction uroporphyrinogen III + 4 H(+) = coproporphyrinogen III + 4 CO2. It participates in porphyrin-containing compound metabolism; protoporphyrin-IX biosynthesis; coproporphyrinogen-III from 5-aminolevulinate: step 4/4. Functionally, catalyzes the decarboxylation of four acetate groups of uroporphyrinogen-III to yield coproporphyrinogen-III. This chain is Uroporphyrinogen decarboxylase, found in Saccharopolyspora erythraea (strain ATCC 11635 / DSM 40517 / JCM 4748 / NBRC 13426 / NCIMB 8594 / NRRL 2338).